The sequence spans 212 residues: Small ribosomal subunit protein eS1 (212 aa).

Belongs to the eukaryotic ribosomal protein eS1 family.

This chain is Small ribosomal subunit protein eS1, found in Haloquadratum walsbyi (strain DSM 16790 / HBSQ001).